Consider the following 74-residue polypeptide: Antimicrobial peptide 36.4 (74 aa).

A signal peptide spans 1–22; it reads MKVNVLLAVFLVVMVVTDHCHA. Position 39 is a lysine amide (Lys39). Residues 44-74 constitute a propeptide that is removed on maturation; sequence LQMEARFQPQNKNYRKRELDLENLFTHMPDY.

This sequence belongs to the non-disulfide-bridged peptide (NDBP) superfamily. Short antimicrobial peptide (group 4) family. In terms of tissue distribution, expressed by the venom gland.

It localises to the secreted. The protein localises to the target cell membrane. Cationic host defense peptide that have antibacterial activity by breaking membranes. Is more effective on Gram-positive than on Gram-negative bacteria. The chain is Antimicrobial peptide 36.4 from Lychas mucronatus (Chinese swimming scorpion).